A 344-amino-acid polypeptide reads, in one-letter code: 4-hydroxy-2-oxovalerate aldolase (344 aa).

Residues 8-260 enclose the Pyruvate carboxyltransferase domain; that stretch reads VTLHDMSLRD…NHGIDLYKIM (253 aa). 16-17 contacts substrate; the sequence is RD. Aspartate 17 lines the Mn(2+) pocket. The active-site Proton acceptor is histidine 20. Positions 170 and 199 each coordinate substrate. Mn(2+) contacts are provided by histidine 199 and histidine 201. Tyrosine 290 provides a ligand contact to substrate.

It belongs to the 4-hydroxy-2-oxovalerate aldolase family.

The catalysed reaction is (S)-4-hydroxy-2-oxopentanoate = acetaldehyde + pyruvate. The polypeptide is 4-hydroxy-2-oxovalerate aldolase (mhpE) (Pseudoalteromonas translucida (strain TAC 125)).